Consider the following 305-residue polypeptide: Mas-related G-protein coupled receptor member A8 (305 aa).

The Extracellular segment spans residues 1 to 17 (MDKTILGSIDIETLIRH). A helical membrane pass occupies residues 18–38 (LMIIIFGLVGLTGNAIVFWLL). The Cytoplasmic segment spans residues 39–46 (GFHLHRNA). A helical transmembrane segment spans residues 47 to 67 (FLVYILNLALADFFYLLCHII). Residues 68–85 (NSIMFLLKVPSPNIILDH) lie on the Extracellular side of the membrane. The helical transmembrane segment at 86 to 106 (CFYTIMIVLYITGLSMLSAIS) threads the bilayer. Residues 107 to 129 (TERCLSVLCPIWYRCHRPEHTST) are Cytoplasmic-facing. The chain crosses the membrane as a helical span at residues 130 to 150 (AMCAVIWVMSLLISILNGYFC). 2 N-linked (GlcNAc...) asparagine glycosylation sites follow: Asn-151 and Asn-159. At 151-172 (NFSSPKYVNNSVCQASDIFIRT) the chain is on the extracellular side. Residues 173 to 193 (YPIFLFVLLCLSTLALLARLF) traverse the membrane as a helical segment. At 194–207 (SGAGKRKFTRLFVT) the chain is on the cytoplasmic side. A helical transmembrane segment spans residues 208–228 (IMLAILVFLLCGLPLGFFWFL). The Extracellular segment spans residues 229-243 (SPWIEDRFIVLDYRL). Residues 244–264 (FFASVVLTVVNSCANPIIYFF) form a helical membrane-spanning segment. The Cytoplasmic segment spans residues 265 to 305 (VGSFRHRLKQQTLKMFLQRALQDTPETPENMVEMSRSKAEP).

Belongs to the G-protein coupled receptor 1 family. Mas subfamily. As to expression, expressed in a subset of sensory neurons that includes nociceptors. Expressed in the subclass of non-peptidergic sensory neurons that are IB4(+) and VR1(-).

The protein resides in the cell membrane. Orphan receptor. May be a receptor for RFamide-family neuropeptides such as NPFF and NPAF, which are analgesic in vivo. May regulate nociceptor function and/or development, including the sensation or modulation of pain. The chain is Mas-related G-protein coupled receptor member A8 (Mrgpra8) from Mus musculus (Mouse).